A 196-amino-acid polypeptide reads, in one-letter code: Pro-FMRFamide-related neuropeptide VF (196 aa).

A signal peptide spans 1-26 (MEIISSKLFILLTLATSSLLTSNIFC). The propeptide occupies 27–55 (ADELVMSNLHSKENYDKYSEPRGYPKGER). Phenylalanine 92 is subject to Phenylalanine amide. Propeptides lie at residues 95-99 (NVQEE) and 115-121 (NMEVSLV). Phenylalanine 131 carries the phenylalanine amide modification. Residues 134–196 (TTTAKSVCRM…IDDAELKQEK (63 aa)) constitute a propeptide that is removed on maturation.

It belongs to the FARP (FMRFamide related peptide) family. Specifically expressed in the retina. As to expression, detected in the hypothalamus.

It localises to the secreted. Functionally, efficiently inhibits forskolin-induced production of cAMP. Acts as a potent negative regulator of gonadotropin synthesis and secretion. Induces secretion of prolactin. Its function is as follows. Efficiently inhibits forskolin-induced production of cAMP. Blocks morphine-induced analgesia. In terms of biological role, shows no inhibitory activity of forskolin-induced production of cAMP. The chain is Pro-FMRFamide-related neuropeptide VF from Homo sapiens (Human).